The following is a 247-amino-acid chain: Ribonuclease 3 (247 aa).

The region spanning 21–149 is the RNase III domain; that stretch reads FKKLSKKIGI…LVGAIYLDRG (129 aa). Glu-62 is a Mg(2+) binding site. Asp-66 is an active-site residue. Mg(2+)-binding residues include Asn-135 and Glu-138. The active site involves Glu-138. Residues 176-245 form the DRBM domain; sequence DYKTQLQEYS…AKELYIRIRR (70 aa).

The protein belongs to the ribonuclease III family. Homodimer. The cofactor is Mg(2+).

Its subcellular location is the cytoplasm. The catalysed reaction is Endonucleolytic cleavage to 5'-phosphomonoester.. In terms of biological role, digests double-stranded RNA. Involved in the processing of primary rRNA transcript to yield the immediate precursors to the large and small rRNAs (23S and 16S). Processes some mRNAs, and tRNAs when they are encoded in the rRNA operon. Processes pre-crRNA and tracrRNA of type II CRISPR loci if present in the organism. The chain is Ribonuclease 3 from Leptospira borgpetersenii serovar Hardjo-bovis (strain L550).